We begin with the raw amino-acid sequence, 42 residues long: Cytochrome b6-f complex subunit 7 (42 aa).

The chain crosses the membrane as a helical span at residues 19-37 (AVTCIFMTLFGLSLGFALL).

This sequence belongs to the PetM family. The 4 large subunits of the cytochrome b6-f complex are cytochrome b6, subunit IV (17 kDa polypeptide, PetD), cytochrome f and the Rieske protein, while the 4 small subunits are PetG, PetL, PetM and PetN. The complex functions as a dimer.

Its subcellular location is the plastid. It localises to the chloroplast thylakoid membrane. Its function is as follows. Component of the cytochrome b6-f complex, which mediates electron transfer between photosystem II (PSII) and photosystem I (PSI), cyclic electron flow around PSI, and state transitions. In Thalassiosira pseudonana (Marine diatom), this protein is Cytochrome b6-f complex subunit 7.